A 432-amino-acid polypeptide reads, in one-letter code: 23S rRNA (uracil(1939)-C(5))-methyltransferase RlmD (432 aa).

The TRAM domain maps to 1–54; sequence MNPVVDILSLDHEGHGVARLDGKVTFVDGALAGERAEIAIFRKHAKYNSANAVA. [4Fe-4S] cluster contacts are provided by cysteine 67, cysteine 73, cysteine 76, and cysteine 155. Residues glutamine 264, phenylalanine 293, asparagine 298, glutamate 314, asparagine 341, and aspartate 362 each contribute to the S-adenosyl-L-methionine site. Cysteine 389 acts as the Nucleophile in catalysis.

It belongs to the class I-like SAM-binding methyltransferase superfamily. RNA M5U methyltransferase family. RlmD subfamily.

It catalyses the reaction uridine(1939) in 23S rRNA + S-adenosyl-L-methionine = 5-methyluridine(1939) in 23S rRNA + S-adenosyl-L-homocysteine + H(+). In terms of biological role, catalyzes the formation of 5-methyl-uridine at position 1939 (m5U1939) in 23S rRNA. The polypeptide is 23S rRNA (uracil(1939)-C(5))-methyltransferase RlmD (Thiobacillus denitrificans (strain ATCC 25259 / T1)).